We begin with the raw amino-acid sequence, 248 residues long: Putative amino-acid ABC transporter-binding protein PatH (248 aa).

Residues 1–21 (MKNWIKVAVAAIALSAATVQA) form the signal peptide.

This sequence belongs to the bacterial solute-binding protein 3 family.

It is found in the periplasm. Probably part of a binding-protein-dependent transport system for an amino acid. The protein is Putative amino-acid ABC transporter-binding protein PatH (patH) of Vibrio harveyi (Beneckea harveyi).